Here is a 62-residue protein sequence, read N- to C-terminus: Venom peptide 6 (62 aa).

Positions 1–26 are cleaved as a signal peptide; that stretch reads MKSTSVFILFAGIAIMACLQMTGTEA. AXPX repeat units follow at residues 26–29, 30–33, and 40–43; these read AAPS, ASPN, and ADPD. Residues 27–46 constitute a propeptide that is removed on maturation; that stretch reads APSASPNPTPVARADPDPEA.

It belongs to the MCD family. Expressed by the venom gland.

The protein localises to the secreted. It localises to the target cell membrane. Functionally, antimicrobial peptide with strong activity against the fungus B.cinerea (MIC=5 uM) and the Gram-positive bacterium S.aureus (MIC=50 uM), and no activity against C.albicans (MIC&gt;200 uM), and the Gram-negative bacterium E.coli (MIC&gt;200 uM). Shows cytolytic activity against insect cell lines. Has no hemolytic activity against human erythrocytes. In vivo, peptide injection in the vicinity of the head and thorax of lepidopteran larvae induces feeding disorder that lasts one or two days before recovering. The protein is Venom peptide 6 of Eumenes pomiformis (Potter wasp).